A 358-amino-acid chain; its full sequence is Biotin synthase (358 aa).

Residues 50-277 (NEVQVSTLCS…KSHVRLSAGR (228 aa)) form the Radical SAM core domain. 3 residues coordinate [4Fe-4S] cluster: Cys-65, Cys-69, and Cys-72. [2Fe-2S] cluster-binding residues include Cys-109, Cys-140, Cys-200, and Arg-272.

Belongs to the radical SAM superfamily. Biotin synthase family. In terms of assembly, homodimer. [4Fe-4S] cluster serves as cofactor. It depends on [2Fe-2S] cluster as a cofactor.

It catalyses the reaction (4R,5S)-dethiobiotin + (sulfur carrier)-SH + 2 reduced [2Fe-2S]-[ferredoxin] + 2 S-adenosyl-L-methionine = (sulfur carrier)-H + biotin + 2 5'-deoxyadenosine + 2 L-methionine + 2 oxidized [2Fe-2S]-[ferredoxin]. It functions in the pathway cofactor biosynthesis; biotin biosynthesis; biotin from 7,8-diaminononanoate: step 2/2. Its function is as follows. Catalyzes the conversion of dethiobiotin (DTB) to biotin by the insertion of a sulfur atom into dethiobiotin via a radical-based mechanism. The protein is Biotin synthase of Cellvibrio japonicus (strain Ueda107) (Pseudomonas fluorescens subsp. cellulosa).